Consider the following 138-residue polypeptide: 1,4-dihydroxy-2-naphthoyl-CoA hydrolase (138 aa).

Asp-15 is a catalytic residue.

It belongs to the 4-hydroxybenzoyl-CoA thioesterase family. DHNA-CoA hydrolase subfamily.

It carries out the reaction 1,4-dihydroxy-2-naphthoyl-CoA + H2O = 1,4-dihydroxy-2-naphthoate + CoA + H(+). It functions in the pathway cofactor biosynthesis; phylloquinone biosynthesis. The protein operates within quinol/quinone metabolism; 1,4-dihydroxy-2-naphthoate biosynthesis; 1,4-dihydroxy-2-naphthoate from chorismate: step 7/7. Functionally, catalyzes the hydrolysis of 1,4-dihydroxy-2-naphthoyl-CoA (DHNA-CoA) to 1,4-dihydroxy-2-naphthoate (DHNA), a reaction involved in phylloquinone (vitamin K1) biosynthesis. The chain is 1,4-dihydroxy-2-naphthoyl-CoA hydrolase from Trichodesmium erythraeum (strain IMS101).